The following is a 101-amino-acid chain: MFENMDFSKMGELLTKAQEKANELEQEALKKEFSAKSGGGLVKVSANGKGEIIDINIDDSLLEDKESMQILLIAAINDVMKMVEQNKKSMASNLFSGMGVL.

It belongs to the YbaB/EbfC family. In terms of assembly, homodimer.

It is found in the cytoplasm. Its subcellular location is the nucleoid. Binds to DNA and alters its conformation. May be involved in regulation of gene expression, nucleoid organization and DNA protection. The protein is Nucleoid-associated protein Cla_0113 of Campylobacter lari (strain RM2100 / D67 / ATCC BAA-1060).